Consider the following 83-residue polypeptide: uncharacterized protein (83 aa).

A helical membrane pass occupies residues A58–V78.

The protein localises to the membrane. This is an uncharacterized protein from Homo sapiens (Human).